A 90-amino-acid chain; its full sequence is Secretory calcium-binding phosphoprotein proline-glutamine-rich 1 (90 aa).

Positions 1-15 (MQLFLLAALLSAAAA) are cleaved as a signal peptide.

Expressed in enamel organ.

Its subcellular location is the secreted. Tooth-associated epithelia protein that may participate in structuring the basal lamina at cell-tooth interface. In Mus musculus (Mouse), this protein is Secretory calcium-binding phosphoprotein proline-glutamine-rich 1.